A 525-amino-acid polypeptide reads, in one-letter code: MPVLPMPPLMQNAVEPMQVDIAPPNEDNENNEEQQIVVENPSIDLEVYANQYAGIVRLHRLIYVADVCPVLAVEALKMAITYVQTTYNVNLYQVLHKRLSDLNAGNAPAPPANAGGDQAGAAAPGPLAAAPLPDIAAQPVAQAQGQAQPAVEKDAFAYDAAWVDTKMKKAALKLEKLDSDLKNYKSNSIKESIRRGHDDLADHYLSCGDLTNALKCYSRARDYCTSGKHVVNMCLNVIKVSIYLQNWAHVMSYISKAESTPDFAEGSKEANAQVHTRLECAAGLAELQQKKYKVAAKHFLNANFDHCDFPEMISTSNVAVYGGLCALATFDRQELKRLVIASTSFKLFLELEPQLRDIIFKFYESKYASCLTLLDEIRDNLLVDMYIAPHVTTLYTKIRNRALIQYFSPYMSADMHKMAMAFNSSVGDLENEVMQLILDGQIQARIDSHNKILFAKEADQRNSTFERALIMGKQYQRHTRMLVLRAAMLKSHIHVKSISREGGSNHGAELCVSAGSSTTAQLARI.

Residues 298-460 (HFLNANFDHC…KILFAKEADQ (163 aa)) enclose the PCI domain.

Belongs to the CSN1 family. Component of the CSN complex, probably composed of CSN1b, alien/CSN2, CSN3, CSN4, CSN5, CSN6, CSN7 and CSN8.

The protein localises to the cytoplasm. It is found in the nucleus. Essential component of the COP9 signalosome complex (CSN), a complex involved in various cellular and developmental processes. The CSN complex is an essential regulator of the ubiquitin (Ubl) conjugation pathway by mediating the deneddylation of the cullin subunits of the SCF-type E3 ligase complexes, leading to decrease the Ubl ligase activity of SCF. The CSN complex plays an essential role in oogenesis and embryogenesis and is required for proper photoreceptor R cell differentiation and promote lamina glial cell migration or axon targeting. It also promotes Ubl-dependent degradation of cyclin E (CycE) during early oogenesis. This chain is COP9 signalosome complex subunit 1b (CSN1b), found in Drosophila melanogaster (Fruit fly).